The primary structure comprises 727 residues: Probable metal-nicotianamine transporter YSL14 (727 aa).

Composition is skewed to low complexity over residues 1–10 (MAQHTAAAAG) and 18–27 (AEAAAAAAAG). Residues 1–61 (MAQHTAAAAG…RNGGADDPDA (61 aa)) are disordered. A compositionally biased stretch (gly residues) spans 45 to 54 (AGGGGGGRNG). 14 helical membrane-spanning segments follow: residues 84–104 (AFVVSALLAVMFSVIVMKLNL), 107–127 (GIIPSLNVSAGLLGFFFVRLW), 152–172 (CVVSAYGIAFSGGFGSYLFGM), 194–214 (LGWMIGFLFLVSFIGLFALVP), 256–276 (LGKYFLFSFFWGFFQWFYTAG), 314–334 (IVNVSVLLGGILSWGVMWPLI), 359–379 (VFISIALILGDGLYNFLKVLI), 432–452 (VAYGGYVVVAALSIGTLPEIF), 460–480 (ILVAYIVAPVLAFCNAYGSGL), 492–512 (LAIFVFGAWAGLSHGGVLVGL), 546–566 (FISQVIGTGMGCVIAPCVFWL), 604–624 (PENCLTLCYIFFAAAIAINLI), 646–666 (FYIGSYFAIDMFLGSVILFVW), and 681–701 (VASGLICGDGIWTLPQSILAL).

The protein belongs to the YSL (TC 2.A.67.2) family. As to expression, expressed in leaves and at low levels in roots.

Its subcellular location is the membrane. Its function is as follows. May be involved in the transport of nicotianamine-chelated metals. The polypeptide is Probable metal-nicotianamine transporter YSL14 (YSL14) (Oryza sativa subsp. japonica (Rice)).